We begin with the raw amino-acid sequence, 68 residues long: DNA-directed RNA polymerase subunit omega (68 aa).

It belongs to the RNA polymerase subunit omega family. In terms of assembly, the RNAP catalytic core consists of 2 alpha, 1 beta, 1 beta' and 1 omega subunit. When a sigma factor is associated with the core the holoenzyme is formed, which can initiate transcription.

The catalysed reaction is RNA(n) + a ribonucleoside 5'-triphosphate = RNA(n+1) + diphosphate. In terms of biological role, promotes RNA polymerase assembly. Latches the N- and C-terminal regions of the beta' subunit thereby facilitating its interaction with the beta and alpha subunits. This chain is DNA-directed RNA polymerase subunit omega, found in Dechloromonas aromatica (strain RCB).